A 70-amino-acid polypeptide reads, in one-letter code: Small ribosomal subunit protein bS21B (70 aa).

This sequence belongs to the bacterial ribosomal protein bS21 family.

This Burkholderia thailandensis (strain ATCC 700388 / DSM 13276 / CCUG 48851 / CIP 106301 / E264) protein is Small ribosomal subunit protein bS21B.